A 220-amino-acid chain; its full sequence is Thiamine-phosphate synthase (220 aa).

4-amino-2-methyl-5-(diphosphooxymethyl)pyrimidine contacts are provided by residues 39-43 and Asn80; that span reads QLRDK. Residues Asp81 and Asp100 each coordinate Mg(2+). 4-amino-2-methyl-5-(diphosphooxymethyl)pyrimidine is bound at residue Ser119. 145 to 147 is a binding site for 2-[(2R,5Z)-2-carboxy-4-methylthiazol-5(2H)-ylidene]ethyl phosphate; that stretch reads TPT. Lys148 is a binding site for 4-amino-2-methyl-5-(diphosphooxymethyl)pyrimidine. Position 176 (Gly176) interacts with 2-[(2R,5Z)-2-carboxy-4-methylthiazol-5(2H)-ylidene]ethyl phosphate.

This sequence belongs to the thiamine-phosphate synthase family. Requires Mg(2+) as cofactor.

It catalyses the reaction 2-[(2R,5Z)-2-carboxy-4-methylthiazol-5(2H)-ylidene]ethyl phosphate + 4-amino-2-methyl-5-(diphosphooxymethyl)pyrimidine + 2 H(+) = thiamine phosphate + CO2 + diphosphate. The catalysed reaction is 2-(2-carboxy-4-methylthiazol-5-yl)ethyl phosphate + 4-amino-2-methyl-5-(diphosphooxymethyl)pyrimidine + 2 H(+) = thiamine phosphate + CO2 + diphosphate. It carries out the reaction 4-methyl-5-(2-phosphooxyethyl)-thiazole + 4-amino-2-methyl-5-(diphosphooxymethyl)pyrimidine + H(+) = thiamine phosphate + diphosphate. Its pathway is cofactor biosynthesis; thiamine diphosphate biosynthesis; thiamine phosphate from 4-amino-2-methyl-5-diphosphomethylpyrimidine and 4-methyl-5-(2-phosphoethyl)-thiazole: step 1/1. In terms of biological role, condenses 4-methyl-5-(beta-hydroxyethyl)thiazole monophosphate (THZ-P) and 2-methyl-4-amino-5-hydroxymethyl pyrimidine pyrophosphate (HMP-PP) to form thiamine monophosphate (TMP). In Mycobacterium ulcerans (strain Agy99), this protein is Thiamine-phosphate synthase.